The sequence spans 305 residues: Ribonuclease BN (305 aa).

Zn(2+)-binding residues include His64, His66, Asp68, His69, His141, Asp212, and His270. The Proton acceptor role is filled by Asp68.

Belongs to the RNase Z family. RNase BN subfamily. In terms of assembly, homodimer. The cofactor is Zn(2+).

Zinc phosphodiesterase, which has both exoribonuclease and endoribonuclease activities. The polypeptide is Ribonuclease BN (Shigella flexneri).